A 483-amino-acid polypeptide reads, in one-letter code: Cobyric acid synthase (483 aa).

The region spanning 252 to 439 is the GATase cobBQ-type domain; it reads KLNVVVPVLT…LHGFFDEAEA (188 aa). The active-site Nucleophile is the C333. Residue H431 is part of the active site.

The protein belongs to the CobB/CobQ family. CobQ subfamily.

It functions in the pathway cofactor biosynthesis; adenosylcobalamin biosynthesis. In terms of biological role, catalyzes amidations at positions B, D, E, and G on adenosylcobyrinic A,C-diamide. NH(2) groups are provided by glutamine, and one molecule of ATP is hydrogenolyzed for each amidation. This chain is Cobyric acid synthase, found in Vibrio parahaemolyticus serotype O3:K6 (strain RIMD 2210633).